We begin with the raw amino-acid sequence, 507 residues long: Archaeal-type glutamate synthase [NADPH] (507 aa).

4Fe-4S ferredoxin-type domains follow at residues 10-39 and 41-70; these read FVVERDDYKCIRCLACVRVCSYGANFYDEN and NRVYTENTKCVGCHFCEAICPTEAITVRKN. Residues C19, C22, C25, C29, C50, C53, C56, and C60 each coordinate [4Fe-4S] cluster.

Belongs to the glutamate synthase family. FMN serves as cofactor.

The enzyme catalyses 2 L-glutamate + NADP(+) = L-glutamine + 2-oxoglutarate + NADPH + H(+). In Thermotoga maritima (strain ATCC 43589 / DSM 3109 / JCM 10099 / NBRC 100826 / MSB8), this protein is Archaeal-type glutamate synthase [NADPH].